The sequence spans 655 residues: Hepatocyte growth factor activator serine protease (655 aa).

A signal peptide spans 1–35 (MGRWAWVPSPWPPPGLGPFLLLLLLLLLLPRGFQP). Positions 36–372 (QPGGNRTESP…RLEACESLTR (337 aa)) are cleaved as a propeptide — removed in mature form. N-linked (GlcNAc...) asparagine glycans are attached at residues Asn40 and Asn48. A disordered region spans residues 64–102 (TSETPATSAPEAEGPQSGGLPPPPRAVPSSSSPQAQALT). The Fibronectin type-II domain occupies 103–150 (EDGRPCRFPFRYGGRMLHACTSEGSAHRKWCATTHNYDRDRAWGYCVE). 19 disulfide bridges follow: Cys108–Cys133, Cys122–Cys148, Cys164–Cys175, Cys169–Cys186, Cys188–Cys197, Cys202–Cys230, Cys228–Cys237, Cys245–Cys256, Cys250–Cys267, Cys269–Cys278, Cys286–Cys367, Cys307–Cys349, Cys338–Cys362, Cys394–Cys521, Cys432–Cys448, Cys440–Cys510, Cys535–Cys604, Cys567–Cys583, and Cys594–Cys622. Residues 160–198 (ALDPCASGPCLNGGSCSNTQDPQSYHCSCPRAFTGKDCG) enclose the EGF-like 1 domain. One can recognise a Fibronectin type-I domain in the interval 200–240 (EKCFDETRYEYLEGGDRWARVRQGHVEQCECFGGRTWCEGT). The EGF-like 2 domain occupies 241–279 (RHTACLSSPCLNGGTCHLIVATGTTVCACPPGFAGRLCN). The region spanning 286 to 367 (CFLGNGTGYR…SWEYCRLEAC (82 aa)) is the Kringle domain. Residue Asn290 is glycosylated (N-linked (GlcNAc...) asparagine). Residues 408–646 (IIGGSSSLPG…YVDWINDRIR (239 aa)) form the Peptidase S1 domain. His447 serves as the catalytic Charge relay system. 2 N-linked (GlcNAc...) asparagine glycosylation sites follow: Asn468 and Asn492. Asp497 functions as the Charge relay system in the catalytic mechanism. Asn546 carries an N-linked (GlcNAc...) asparagine glycan. Ser598 serves as the catalytic Charge relay system.

Belongs to the peptidase S1 family. Heterodimer of a short chain and a long chain linked by a disulfide bond. Post-translationally, the active form of HGFAC presents in the serum is derived from the COOH-terminal region of the precursor by the cleavage of bonds between Arg-372 and Val-373 and Arg-407 and Ile-408. As to expression, liver.

The protein localises to the secreted. In terms of biological role, serine protease that hydrolyzes the inactive zymogen hepatocyte growth factor (HGFsc) to an activated disulfide-linked heterodimer, then initiating hepatocyte growth factor receptor signaling pathway. The protein is Hepatocyte growth factor activator serine protease of Homo sapiens (Human).